The following is a 489-amino-acid chain: tRNA(Ile)-lysidine synthase (489 aa).

35-40 (SGGLDS) contributes to the ATP binding site.

The protein belongs to the tRNA(Ile)-lysidine synthase family.

It is found in the cytoplasm. The enzyme catalyses cytidine(34) in tRNA(Ile2) + L-lysine + ATP = lysidine(34) in tRNA(Ile2) + AMP + diphosphate + H(+). In terms of biological role, ligates lysine onto the cytidine present at position 34 of the AUA codon-specific tRNA(Ile) that contains the anticodon CAU, in an ATP-dependent manner. Cytidine is converted to lysidine, thus changing the amino acid specificity of the tRNA from methionine to isoleucine. The sequence is that of tRNA(Ile)-lysidine synthase from Burkholderia mallei (strain ATCC 23344).